Reading from the N-terminus, the 261-residue chain is Proteasome subunit alpha type-4 (261 aa).

2 positions are modified to phosphoserine: Ser13 and Ser75. Lys127 is subject to N6-acetyllysine. At Ser173 the chain carries Phosphoserine. N6-acetyllysine is present on Lys176. A disordered region spans residues 240–261 (HEEEEAKAEREKKEKEQKEKDK).

The protein belongs to the peptidase T1A family. In terms of assembly, the 26S proteasome consists of a 20S proteasome core and two 19S regulatory subunits. The 20S proteasome core is a barrel-shaped complex made of 28 subunits that are arranged in four stacked rings. The two outer rings are each formed by seven alpha subunits, and the two inner rings are formed by seven beta subunits. The proteolytic activity is exerted by three beta-subunits PSMB5, PSMB6 and PSMB7.

It is found in the cytoplasm. The protein localises to the nucleus. Component of the 20S core proteasome complex involved in the proteolytic degradation of most intracellular proteins. This complex plays numerous essential roles within the cell by associating with different regulatory particles. Associated with two 19S regulatory particles, forms the 26S proteasome and thus participates in the ATP-dependent degradation of ubiquitinated proteins. The 26S proteasome plays a key role in the maintenance of protein homeostasis by removing misfolded or damaged proteins that could impair cellular functions, and by removing proteins whose functions are no longer required. Associated with the PA200 or PA28, the 20S proteasome mediates ubiquitin-independent protein degradation. This type of proteolysis is required in several pathways including spermatogenesis (20S-PA200 complex) or generation of a subset of MHC class I-presented antigenic peptides (20S-PA28 complex). The protein is Proteasome subunit alpha type-4 (PSMA4) of Bos taurus (Bovine).